The following is a 255-amino-acid chain: Thiazole synthase (255 aa).

The Schiff-base intermediate with DXP role is filled by K97. 1-deoxy-D-xylulose 5-phosphate-binding positions include G158, 184-185, and 206-207; these read AG and NT.

This sequence belongs to the ThiG family. Homotetramer. Forms heterodimers with either ThiH or ThiS.

The protein resides in the cytoplasm. It catalyses the reaction [ThiS sulfur-carrier protein]-C-terminal-Gly-aminoethanethioate + 2-iminoacetate + 1-deoxy-D-xylulose 5-phosphate = [ThiS sulfur-carrier protein]-C-terminal Gly-Gly + 2-[(2R,5Z)-2-carboxy-4-methylthiazol-5(2H)-ylidene]ethyl phosphate + 2 H2O + H(+). It functions in the pathway cofactor biosynthesis; thiamine diphosphate biosynthesis. Functionally, catalyzes the rearrangement of 1-deoxy-D-xylulose 5-phosphate (DXP) to produce the thiazole phosphate moiety of thiamine. Sulfur is provided by the thiocarboxylate moiety of the carrier protein ThiS. In vitro, sulfur can be provided by H(2)S. The protein is Thiazole synthase of Acetivibrio thermocellus (strain ATCC 27405 / DSM 1237 / JCM 9322 / NBRC 103400 / NCIMB 10682 / NRRL B-4536 / VPI 7372) (Clostridium thermocellum).